Reading from the N-terminus, the 293-residue chain is Ribonuclease HIII (293 aa).

In terms of domain architecture, RNase H type-2 spans 78–293 (LPLIGTDEVG…TEKAKKRLER (216 aa)). Residues Asp84, Glu85, and Asp187 each coordinate a divalent metal cation.

It belongs to the RNase HII family. RnhC subfamily. Requires Mn(2+) as cofactor. The cofactor is Mg(2+).

The protein resides in the cytoplasm. The catalysed reaction is Endonucleolytic cleavage to 5'-phosphomonoester.. In terms of biological role, endonuclease that specifically degrades the RNA of RNA-DNA hybrids. The chain is Ribonuclease HIII from Streptococcus pneumoniae (strain Taiwan19F-14).